A 138-amino-acid chain; its full sequence is ATP synthase epsilon chain (138 aa).

It belongs to the ATPase epsilon chain family. As to quaternary structure, F-type ATPases have 2 components, CF(1) - the catalytic core - and CF(0) - the membrane proton channel. CF(1) has five subunits: alpha(3), beta(3), gamma(1), delta(1), epsilon(1). CF(0) has three main subunits: a, b and c.

The protein localises to the cell inner membrane. Produces ATP from ADP in the presence of a proton gradient across the membrane. This is ATP synthase epsilon chain from Bartonella henselae (strain ATCC 49882 / DSM 28221 / CCUG 30454 / Houston 1) (Rochalimaea henselae).